The chain runs to 489 residues: Beta-galactosidase (489 aa).

Lys116 carries the post-translational modification N6-methyllysine; partial. Position 135 is an N6-methyllysine (Lys135). Catalysis depends on Glu206, which acts as the Proton donor. Residues Lys273 and Lys311 each carry the N6-methyllysine; partial modification. N6-methyllysine is present on Lys332. Residue Glu387 is the Nucleophile of the active site.

Homotetramer.

The enzyme catalyses Hydrolysis of terminal non-reducing beta-D-galactose residues in beta-D-galactosides.. The sequence is that of Beta-galactosidase (lacS) from Saccharolobus solfataricus (strain ATCC 35092 / DSM 1617 / JCM 11322 / P2) (Sulfolobus solfataricus).